We begin with the raw amino-acid sequence, 779 residues long: Filament-like plant protein 1 (779 aa).

Residues 1-14 (MEKRKRESSERSFG) are compositionally biased toward basic and acidic residues. Disordered regions lie at residues 1 to 55 (MEKR…ETEK), 253 to 274 (ASFN…MDVS), and 315 to 336 (PETP…VVVP). Residues 47–200 (VSLEVETEKE…KENVMLRHEL (154 aa)) adopt a coiled-coil conformation. A compositionally biased stretch (basic and acidic residues) spans 256 to 272 (NDHRSTDSHSDGGERMD). The span at 324-336 (SGPESVTEEVVVP) shows a compositional bias: low complexity. A coiled-coil region spans residues 337–674 (SENSLASEIE…ANCQKTIASL (338 aa)). Basic and acidic residues predominate over residues 718–731 (FMTRNHPESIKPTK). Residues 718–764 (FMTRNHPESIKPTKETSPSSSSSTASAAVSMPVSTNRGSSEKNRNGF) form a disordered region. Positions 733-752 (TSPSSSSSTASAAVSMPVST) are enriched in low complexity.

This sequence belongs to the FPP family. Interacts with WPP/MAF proteins.

This is Filament-like plant protein 1 (FPP1) from Arabidopsis thaliana (Mouse-ear cress).